We begin with the raw amino-acid sequence, 365 residues long: Large ribosomal subunit protein uL3 (365 aa).

The segment at 343–365 is disordered; sequence RPPKKKPPVQRPQITYVSVESKQ. Residues 354 to 365 are compositionally biased toward polar residues; sequence PQITYVSVESKQ.

Belongs to the universal ribosomal protein uL3 family. In terms of assembly, part of the 50S ribosomal subunit. Forms a cluster with proteins L14 and L24e.

One of the primary rRNA binding proteins, it binds directly near the 3'-end of the 23S rRNA, where it nucleates assembly of the 50S subunit. This is Large ribosomal subunit protein uL3 from Pyrococcus furiosus (strain ATCC 43587 / DSM 3638 / JCM 8422 / Vc1).